The sequence spans 332 residues: Protein FAM131B (332 aa).

Positions 1 to 22 (MDSTSSLHGSSLHRPSTEQTRT) are disordered. A phosphoserine mark is found at S47, S114, and S117. The interval 221 to 332 (LGPAFDDSQP…FDEEEGDANN (112 aa)) is disordered. Basic and acidic residues-rich tracts occupy residues 272 to 281 (PVEEEKRPLA) and 288 to 302 (AGCR…REDP). A phosphoserine mark is found at S295, S297, and S313. T316 bears the Phosphothreonine mark. Phosphoserine is present on residues S317, S318, and S322. The span at 323 to 332 (FDEEEGDANN) shows a compositional bias: acidic residues.

This sequence belongs to the FAM131 family.

The polypeptide is Protein FAM131B (Fam131b) (Rattus norvegicus (Rat)).